The primary structure comprises 284 residues: Probable 3-mercaptopyruvate sulfurtransferase (284 aa).

Rhodanese domains follow at residues 17-138 (SEPD…ALTN) and 168-281 (GQPG…RPVA). Position 182 (Arg-182) interacts with substrate. Cys-241 (cysteine persulfide intermediate) is an active-site residue. Residues 241 to 247 (CGSGVTA) are substrate specificity.

Its subcellular location is the cytoplasm. The catalysed reaction is 2-oxo-3-sulfanylpropanoate + [thioredoxin]-dithiol = [thioredoxin]-disulfide + hydrogen sulfide + pyruvate + H(+). Catalyzes the transfer of sulfur from 3-mercaptopyruvate to a thiol-containing acceptor to form an intramolecular disulfide releasing hydrogen sulfide and pyruvate. The polypeptide is Probable 3-mercaptopyruvate sulfurtransferase (sseA) (Pseudomonas aeruginosa (strain ATCC 15692 / DSM 22644 / CIP 104116 / JCM 14847 / LMG 12228 / 1C / PRS 101 / PAO1)).